A 700-amino-acid polypeptide reads, in one-letter code: MNPIVKSFEYGQHTVTLETGVIARQADAAVLASMGDTTVLVTVVGKKEADAGRDFFPLTVNYQEKTYAAGKIPGGFFKREGRPSEDETLIARLIDRPIRPLFPNGFKNEVQVIITVVSVDPQIEPDIISMIGTSAALAISGIPFSGPLGAARVGYIDGEYVLNPSVAQLATSQLNLVVAGTAGAVLMVESEAQALPEEVMLGSVVYGHDQQQVVIKAIAEFKAEAGKPTWDWTAPTQDADLVAQIKELAEAGLGDAYKIQVKQDRYAQVSVVKAATKEALLASNPSIDLREVDNLLGSLEKKVVRGRIIRGEPRIDGREPDMIRALSVLAGVLPRTHGSALFTRGETQALVTCTLGTERDAQKIDSIMGERTNRFMLHYNFPPYSVGETGMVGSPKRREIGHGKLAWRGINAVMPSAAEFPYSVRVVSEITESNGSSSMASVCGTSLALMDAGVPIKTSVAGIAMGLVKEGDDFVVLSDILGDEDHLGDMDFKVAGTRDGITALQMDIKIEGITKEIMDIALQQAYGARVHILNVMDQAIGSHRDDISDHAPRITVIKINPEKIRDVIGKGGAVIRALTEETGTTIELEDDGTVKIASSNGEATKEAIRRIEEITSEVEVGRIYNGKVIRIVDFGAFVNILPGKDGLVHISQISDERVANVSDHLELNQEVAVKVMEVDRQGRVRLSIKEAQTKEAAAAE.

Mg(2+)-binding residues include D485 and D491. Residues 552–611 (PRITVIKINPEKIRDVIGKGGAVIRALTEETGTTIELEDDGTVKIASSNGEATKEAIRRI) enclose the KH domain. Residues 621–689 (GRIYNGKVIR…RQGRVRLSIK (69 aa)) form the S1 motif domain.

The protein belongs to the polyribonucleotide nucleotidyltransferase family. Component of the RNA degradosome, which is a multiprotein complex involved in RNA processing and mRNA degradation. Mg(2+) is required as a cofactor.

It is found in the cytoplasm. The enzyme catalyses RNA(n+1) + phosphate = RNA(n) + a ribonucleoside 5'-diphosphate. Its function is as follows. Involved in mRNA degradation. Catalyzes the phosphorolysis of single-stranded polyribonucleotides processively in the 3'- to 5'-direction. This Shewanella baltica (strain OS185) protein is Polyribonucleotide nucleotidyltransferase.